The chain runs to 69 residues: Cold shock protein CapB (69 aa).

The CSD domain occupies 7–66; sequence GTVKWFNDEKGFGFITPQSGDDLFVHFKAIQSDGFKSLKEGQQVSFIATRGQKGMQAEEV.

The protein resides in the cytoplasm. In terms of biological role, affects cell viability at low temperatures. The polypeptide is Cold shock protein CapB (capB) (Pseudomonas fragi).